The sequence spans 273 residues: Probable ribosomal RNA small subunit methyltransferase A (273 aa).

Positions 26, 28, 53, 74, 98, and 113 each coordinate S-adenosyl-L-methionine.

Belongs to the class I-like SAM-binding methyltransferase superfamily. rRNA adenine N(6)-methyltransferase family. RsmA subfamily.

The protein localises to the cytoplasm. Functionally, specifically dimethylates two adjacent adenosines in the loop of a conserved hairpin near the 3'-end of 16S rRNA in the 30S particle. May play a critical role in biogenesis of 30S subunits. The sequence is that of Probable ribosomal RNA small subunit methyltransferase A from Methanothermobacter thermautotrophicus (strain ATCC 29096 / DSM 1053 / JCM 10044 / NBRC 100330 / Delta H) (Methanobacterium thermoautotrophicum).